A 99-amino-acid polypeptide reads, in one-letter code: Cell cycle protein GpsB (99 aa).

A coiled-coil region spans residues 34–71 (LDMIIKDYETFHQEIEELQQENLQLKKQLEEASKKQPV).

This sequence belongs to the GpsB family. Forms polymers through the coiled coil domains. Interacts with PBP1, MreC and EzrA.

It localises to the cytoplasm. Divisome component that associates with the complex late in its assembly, after the Z-ring is formed, and is dependent on DivIC and PBP2B for its recruitment to the divisome. Together with EzrA, is a key component of the system that regulates PBP1 localization during cell cycle progression. Its main role could be the removal of PBP1 from the cell pole after pole maturation is completed. Also contributes to the recruitment of PBP1 to the division complex. Not essential for septum formation. This chain is Cell cycle protein GpsB, found in Bacillus velezensis (strain DSM 23117 / BGSC 10A6 / LMG 26770 / FZB42) (Bacillus amyloliquefaciens subsp. plantarum).